Reading from the N-terminus, the 155-residue chain is Putative pre-16S rRNA nuclease (155 aa).

This sequence belongs to the YqgF nuclease family.

The protein localises to the cytoplasm. Could be a nuclease involved in processing of the 5'-end of pre-16S rRNA. The sequence is that of Putative pre-16S rRNA nuclease from Xanthomonas oryzae pv. oryzae (strain MAFF 311018).